We begin with the raw amino-acid sequence, 269 residues long: Ubiquinone/menaquinone biosynthesis C-methyltransferase UbiE (269 aa).

S-adenosyl-L-methionine contacts are provided by residues threonine 92, aspartate 113, and 141–142 (NA).

Belongs to the class I-like SAM-binding methyltransferase superfamily. MenG/UbiE family.

It carries out the reaction a 2-demethylmenaquinol + S-adenosyl-L-methionine = a menaquinol + S-adenosyl-L-homocysteine + H(+). The enzyme catalyses a 2-methoxy-6-(all-trans-polyprenyl)benzene-1,4-diol + S-adenosyl-L-methionine = a 5-methoxy-2-methyl-3-(all-trans-polyprenyl)benzene-1,4-diol + S-adenosyl-L-homocysteine + H(+). The protein operates within quinol/quinone metabolism; menaquinone biosynthesis; menaquinol from 1,4-dihydroxy-2-naphthoate: step 2/2. Its pathway is cofactor biosynthesis; ubiquinone biosynthesis. Its function is as follows. Methyltransferase required for the conversion of demethylmenaquinol (DMKH2) to menaquinol (MKH2) and the conversion of 2-polyprenyl-6-methoxy-1,4-benzoquinol (DDMQH2) to 2-polyprenyl-3-methyl-6-methoxy-1,4-benzoquinol (DMQH2). In Brucella canis (strain ATCC 23365 / NCTC 10854 / RM-666), this protein is Ubiquinone/menaquinone biosynthesis C-methyltransferase UbiE.